The sequence spans 717 residues: UvrABC system protein C (717 aa).

In terms of domain architecture, GIY-YIG spans 16–95; the sequence is DSPGVYKFRD…IKEFDPRFNV (80 aa). One can recognise a UVR domain in the interval 208-243; that stretch reads GTYIRRLEKDMMQAAEEMEYERAARLRDDAEALKRA. A disordered region spans residues 467 to 548; sequence ERTGEWEEAP…PREDDGRPKR (82 aa). Low complexity predominate over residues 477–522; the sequence is EAAPGSASVHASATGPAATGQATAGPAAMGQAAAGPVSTGPAATGP.

The protein belongs to the UvrC family. As to quaternary structure, interacts with UvrB in an incision complex.

Its subcellular location is the cytoplasm. In terms of biological role, the UvrABC repair system catalyzes the recognition and processing of DNA lesions. UvrC both incises the 5' and 3' sides of the lesion. The N-terminal half is responsible for the 3' incision and the C-terminal half is responsible for the 5' incision. The sequence is that of UvrABC system protein C from Streptomyces griseus subsp. griseus (strain JCM 4626 / CBS 651.72 / NBRC 13350 / KCC S-0626 / ISP 5235).